Here is a 62-residue protein sequence, read N- to C-terminus: [Ser6, Val10, Asp11]-phyllokinin (62 aa).

The first 22 residues, Met1 to Cys22, serve as a signal peptide directing secretion. The propeptide occupies Glu23–Asp51. A disordered region spans residues Glu24–Asp62. The span at Glu30–Ser42 shows a compositional bias: acidic residues.

The protein belongs to the frog skin active peptide (FSAP) family. Bradykinin-related peptide subfamily. Expressed by the skin glands.

The protein resides in the secreted. Induces relaxation of rat smooth muscle from tail artery and contraction of that from ileum, urinary bladder and uterus. Binds to both bradykinin receptor B1 (BDKRB1) and B2 (BDKRB2). The polypeptide is [Ser6, Val10, Asp11]-phyllokinin (Agalychnis spurrelli (Gliding leaf frog)).